Here is a 321-residue protein sequence, read N- to C-terminus: Malate dehydrogenase (321 aa).

NAD(+) contacts are provided by residues 10–15 (GAGQIG) and Asp-34. Positions 83 and 89 each coordinate substrate. Residues Asn-96 and 119–121 (ITN) each bind NAD(+). Substrate is bound by residues Asn-121 and Arg-152. His-176 acts as the Proton acceptor in catalysis.

The protein belongs to the LDH/MDH superfamily. MDH type 3 family.

The enzyme catalyses (S)-malate + NAD(+) = oxaloacetate + NADH + H(+). Functionally, catalyzes the reversible oxidation of malate to oxaloacetate. The sequence is that of Malate dehydrogenase from Xanthobacter autotrophicus (strain ATCC BAA-1158 / Py2).